Reading from the N-terminus, the 420-residue chain is Gamma-glutamyl phosphate reductase (420 aa).

It belongs to the gamma-glutamyl phosphate reductase family.

The protein resides in the cytoplasm. It carries out the reaction L-glutamate 5-semialdehyde + phosphate + NADP(+) = L-glutamyl 5-phosphate + NADPH + H(+). The protein operates within amino-acid biosynthesis; L-proline biosynthesis; L-glutamate 5-semialdehyde from L-glutamate: step 2/2. Its function is as follows. Catalyzes the NADPH-dependent reduction of L-glutamate 5-phosphate into L-glutamate 5-semialdehyde and phosphate. The product spontaneously undergoes cyclization to form 1-pyrroline-5-carboxylate. In Cereibacter sphaeroides (strain ATCC 17023 / DSM 158 / JCM 6121 / CCUG 31486 / LMG 2827 / NBRC 12203 / NCIMB 8253 / ATH 2.4.1.) (Rhodobacter sphaeroides), this protein is Gamma-glutamyl phosphate reductase.